Here is a 103-residue protein sequence, read N- to C-terminus: Large ribosomal subunit protein bL21 (103 aa).

It belongs to the bacterial ribosomal protein bL21 family. As to quaternary structure, part of the 50S ribosomal subunit. Contacts protein L20.

In terms of biological role, this protein binds to 23S rRNA in the presence of protein L20. The polypeptide is Large ribosomal subunit protein bL21 (Chloroflexus aggregans (strain MD-66 / DSM 9485)).